A 349-amino-acid chain; its full sequence is Probable protease SohB (349 aa).

Over 1–8 (MELLSEYG) the chain is Periplasmic. Residues 9 to 29 (LFLAKIVTVVLAIAAIAAIIV) form a helical membrane-spanning segment. Over 30-349 (NVAQRNKRQR…WWQRGQKPLM (320 aa)) the chain is Cytoplasmic. Ser178 functions as the Nucleophile in the catalytic mechanism. The Proton donor/acceptor role is filled by Lys230.

This sequence belongs to the peptidase S49 family.

It localises to the cell inner membrane. In terms of biological role, multicopy suppressor of the HtrA (DegP) null phenotype. It is possibly a protease, not essential for bacterial viability. The polypeptide is Probable protease SohB (sohB) (Escherichia coli (strain K12)).